The sequence spans 312 residues: Olfactory receptor 1J21 (312 aa).

7 helical membrane passes run 29–49 (ALFLAMYLTTVLGNLLIILLI), 58–78 (PMYFFLSHLAFTDISFSSVTA), 95–115 (AGCVSQIYFFLLFGCIDNFLL), 143–163 (LLVMVSWAFSSSNGLVHTLLF), 197–217 (LVILTLAVVVITVPFICILVS), 241–261 (CGSHLCVVSLYYGAIIGLYFF), and 272–292 (VIVAVLYTVVTPMLNPFIYSL).

This sequence belongs to the G-protein coupled receptor 1 family.

It localises to the cell membrane. Functionally, odorant receptor. Activated by (+) and (-)-carvone. This is Olfactory receptor 1J21 from Mus musculus (Mouse).